The sequence spans 1171 residues: Zinc finger BED domain-containing protein 4 (1171 aa).

Positions E25–G62 are disordered. Basic and acidic residues predominate over residues S36–Q51. A Glycyl lysine isopeptide (Lys-Gly) (interchain with G-Cter in SUMO2) cross-link involves residue K43. 2 BED-type zinc fingers span residues R115–E172 and R285–E342. Positions 136, 139, 160, 165, 306, 309, 330, and 335 each coordinate Zn(2+). The segment covering L362–S385 has biased composition (low complexity). The tract at residues L362–D405 is disordered. 2 consecutive BED-type zinc fingers follow at residues R456 to Q512 and K558 to E615. Zn(2+)-binding residues include C477 and C480. A Glycyl lysine isopeptide (Lys-Gly) (interchain with G-Cter in SUMO2) cross-link involves residue K489. The Zn(2+) site is built by H500, H505, C579, C582, H603, and H608. The disordered stretch occupies residues T614 to S640. Phosphoserine is present on S624. Residues L1086 to Y1171 are required for homodimerization and nuclear accumulation.

As to quaternary structure, homodimer; via C-terminus. Interacts with MYH9. Interacts with SAFB/SAFB1. Expressed in testis, heart, lung, and weakly expressed in brain, liver, muscle, placenta and small intestine. Expressed in the retina, found in the cone photoreceptors, Mueller cells, cone pedicles and in the innermost retinal layer.

Its subcellular location is the nucleus. It localises to the cytoplasm. The protein localises to the photoreceptor inner segment. Functionally, transcriptional regulator that binds to poly-guanine tracts in gene promoters and activates transcription. Able to bind single- and double-stranded DNA and RNA. This is Zinc finger BED domain-containing protein 4 (ZBED4) from Homo sapiens (Human).